A 72-amino-acid polypeptide reads, in one-letter code: Cytochrome b-c1 complex subunit 8-2, mitochondrial (72 aa).

The Mitochondrial matrix segment spans residues 1–41 (MGKQPVKLKAVVYALSPFQQKIMTGLWKDLPEKIHHKVSEN). A helical membrane pass occupies residues 42 to 58 (WISTILLVAPVVGTYSY). At 59-72 (AQYFKEQEKLEHRF) the chain is on the mitochondrial intermembrane side.

It belongs to the UQCRQ/QCR8 family. Component of the ubiquinol-cytochrome c oxidoreductase (cytochrome b-c1 complex, complex III, CIII), a multisubunit enzyme composed of 10 subunits. The complex is composed of 3 respiratory subunits cytochrome b (MT-CYB), cytochrome c1 (CYC1-1 or CYC1-2) and Rieske protein (UCR1-1 or UCR1-2), 2 core protein subunits MPPalpha1 (or MPPalpha2) and MPPB, and 5 low-molecular weight protein subunits QCR7-1 (or QCR7-2), UCRQ-1 (or UCRQ-2), QCR9, UCRY and probably QCR6-1 (or QCR6-2). The complex exists as an obligatory dimer and forms supercomplexes (SCs) in the inner mitochondrial membrane with NADH-ubiquinone oxidoreductase (complex I, CI), resulting in different assemblies (supercomplexes SCI(1)III(2) and SCI(2)III(4)).

The protein resides in the mitochondrion inner membrane. Its function is as follows. Component of the ubiquinol-cytochrome c oxidoreductase, a multisubunit transmembrane complex that is part of the mitochondrial electron transport chain which drives oxidative phosphorylation. The respiratory chain contains 3 multisubunit complexes succinate dehydrogenase (complex II, CII), ubiquinol-cytochrome c oxidoreductase (cytochrome b-c1 complex, complex III, CIII) and cytochrome c oxidase (complex IV, CIV), that cooperate to transfer electrons derived from NADH and succinate to molecular oxygen, creating an electrochemical gradient over the inner membrane that drives transmembrane transport and the ATP synthase. The cytochrome b-c1 complex catalyzes electron transfer from ubiquinol to cytochrome c, linking this redox reaction to translocation of protons across the mitochondrial inner membrane, with protons being carried across the membrane as hydrogens on the quinol. In the process called Q cycle, 2 protons are consumed from the matrix, 4 protons are released into the intermembrane space and 2 electrons are passed to cytochrome c. The protein is Cytochrome b-c1 complex subunit 8-2, mitochondrial (UCRQ-2) of Arabidopsis thaliana (Mouse-ear cress).